The sequence spans 298 residues: Lipoyl synthase (298 aa).

Residues Cys40, Cys45, Cys51, Cys67, Cys71, Cys74, and Ser280 each coordinate [4Fe-4S] cluster. Positions 53 to 269 (AVRKTATFMI…KEIALSKGFS (217 aa)) constitute a Radical SAM core domain.

It belongs to the radical SAM superfamily. Lipoyl synthase family. It depends on [4Fe-4S] cluster as a cofactor.

It localises to the cytoplasm. It catalyses the reaction [[Fe-S] cluster scaffold protein carrying a second [4Fe-4S](2+) cluster] + N(6)-octanoyl-L-lysyl-[protein] + 2 oxidized [2Fe-2S]-[ferredoxin] + 2 S-adenosyl-L-methionine + 4 H(+) = [[Fe-S] cluster scaffold protein] + N(6)-[(R)-dihydrolipoyl]-L-lysyl-[protein] + 4 Fe(3+) + 2 hydrogen sulfide + 2 5'-deoxyadenosine + 2 L-methionine + 2 reduced [2Fe-2S]-[ferredoxin]. It participates in protein modification; protein lipoylation via endogenous pathway; protein N(6)-(lipoyl)lysine from octanoyl-[acyl-carrier-protein]. Catalyzes the radical-mediated insertion of two sulfur atoms into the C-6 and C-8 positions of the octanoyl moiety bound to the lipoyl domains of lipoate-dependent enzymes, thereby converting the octanoylated domains into lipoylated derivatives. The protein is Lipoyl synthase of Bacillus mycoides (strain KBAB4) (Bacillus weihenstephanensis).